The chain runs to 362 residues: Peptide chain release factor 1 (362 aa).

Q240 carries the N5-methylglutamine modification.

It belongs to the prokaryotic/mitochondrial release factor family. Post-translationally, methylated by PrmC. Methylation increases the termination efficiency of RF1.

The protein localises to the cytoplasm. Its function is as follows. Peptide chain release factor 1 directs the termination of translation in response to the peptide chain termination codons UAG and UAA. This chain is Peptide chain release factor 1, found in Bifidobacterium longum (strain DJO10A).